The chain runs to 154 residues: 6,7-dimethyl-8-ribityllumazine synthase (154 aa).

Residues F22, 56-58 (AFE), and 80-82 (AVI) contribute to the 5-amino-6-(D-ribitylamino)uracil site. (2S)-2-hydroxy-3-oxobutyl phosphate is bound at residue 85–86 (ST). The active-site Proton donor is the H88. F113 contributes to the 5-amino-6-(D-ribitylamino)uracil binding site. Position 127 (R127) interacts with (2S)-2-hydroxy-3-oxobutyl phosphate.

This sequence belongs to the DMRL synthase family.

The catalysed reaction is (2S)-2-hydroxy-3-oxobutyl phosphate + 5-amino-6-(D-ribitylamino)uracil = 6,7-dimethyl-8-(1-D-ribityl)lumazine + phosphate + 2 H2O + H(+). The protein operates within cofactor biosynthesis; riboflavin biosynthesis; riboflavin from 2-hydroxy-3-oxobutyl phosphate and 5-amino-6-(D-ribitylamino)uracil: step 1/2. Catalyzes the formation of 6,7-dimethyl-8-ribityllumazine by condensation of 5-amino-6-(D-ribitylamino)uracil with 3,4-dihydroxy-2-butanone 4-phosphate. This is the penultimate step in the biosynthesis of riboflavin. This is 6,7-dimethyl-8-ribityllumazine synthase from Clostridium kluyveri (strain NBRC 12016).